The following is a 73-amino-acid chain: Hypotensin-like peptide (73 aa).

Residues 1-25 (MKMMIAIVFVSILLLMFSLSSTAMG) form the signal peptide.

Expressed by the venom gland.

The protein localises to the secreted. Its function is as follows. May potentiate the hypotensive effect of bradykinin. In Tityus serrulatus (Brazilian scorpion), this protein is Hypotensin-like peptide.